The following is a 609-amino-acid chain: D-apionate lactonase (609 aa).

It carries out the reaction D-apionolactone + H2O = D-apionate + H(+). Its pathway is carbohydrate metabolism. Functionally, involved in catabolism of D-apiose. Hydrolyzes D-apionolactone to D-apionate. The sequence is that of D-apionate lactonase from Brucella anthropi (strain ATCC 49188 / DSM 6882 / CCUG 24695 / JCM 21032 / LMG 3331 / NBRC 15819 / NCTC 12168 / Alc 37) (Ochrobactrum anthropi).